Reading from the N-terminus, the 491-residue chain is Ribonuclease Y (491 aa).

A helical transmembrane segment spans residues L4–I24. A KH domain is found at V181 to D247. One can recognise an HD domain in the interval V307–G400.

It belongs to the RNase Y family.

Its subcellular location is the cell membrane. Its function is as follows. Endoribonuclease that initiates mRNA decay. The protein is Ribonuclease Y of Acidothermus cellulolyticus (strain ATCC 43068 / DSM 8971 / 11B).